Here is a 469-residue protein sequence, read N- to C-terminus: Extracellular endo-alpha-(1-&gt;5)-L-arabinanase 2 (469 aa).

Residues 1–26 (MFNRLFRVCFLAALIMAFTLPNSVYA) form the signal peptide. The active-site Proton acceptor is Asp-38. Substrate is bound by residues Asp-38, Asp-122, 168 to 171 (NVVD), 188 to 190 (SYS), and 220 to 224 (HSRIE). Glu-224 serves as the catalytic Proton donor. His-318 provides a ligand contact to Ca(2+).

The protein belongs to the glycosyl hydrolase 43 family. As to quaternary structure, homodimer. Ca(2+) is required as a cofactor.

The protein resides in the secreted. The catalysed reaction is Endohydrolysis of (1-&gt;5)-alpha-arabinofuranosidic linkages in (1-&gt;5)-arabinans.. Its pathway is glycan metabolism; L-arabinan degradation. Involved in the degradation of arabinan and is a key enzyme in the complete degradation of the plant cell wall. Catalyzes the internal cleavage of alpha-(1-&gt;5)-L-arabinofuranosyl residues of the alpha-1,5-L-arabinan to produce arabino-oligosaccharides and L-arabinose. It is also active toward linear branched sugar beet arabinan, and pectin from apple. The chain is Extracellular endo-alpha-(1-&gt;5)-L-arabinanase 2 (abn2) from Bacillus subtilis (strain 168).